The following is a 128-amino-acid chain: RYamide neuropeptides (128 aa).

Residues 1–23 (MHARKLIVVLVYILTVLVSVAVS) form the signal peptide. A propeptide spanning residues 26–29 (YTSE) is cleaved from the precursor. Tyrosine amide is present on Tyr44. The propeptide occupies 47–63 (GGPSPNNKENKVNIRPR). Tyr73 carries the tyrosine amide modification. Positions 77–128 (SGWSPNASLVYPVSTPLCGLDEDLSCAYTGISDLYRCTPRKGESEEFTTSSN) are excised as a propeptide.

The protein localises to the secreted. Neuropeptides RYamide-1 and RYamide-2 are ligands for the G-protein coupled receptor RYa-R. RYamide-2 is the most potent activator of RYa-R. This Tribolium castaneum (Red flour beetle) protein is RYamide neuropeptides.